Reading from the N-terminus, the 183-residue chain is Peptide deformylase (183 aa).

The Fe cation site is built by Cys-111 and His-154. Glu-155 is a catalytic residue. His-158 lines the Fe cation pocket.

It belongs to the polypeptide deformylase family. It depends on Fe(2+) as a cofactor.

It catalyses the reaction N-terminal N-formyl-L-methionyl-[peptide] + H2O = N-terminal L-methionyl-[peptide] + formate. Functionally, removes the formyl group from the N-terminal Met of newly synthesized proteins. Requires at least a dipeptide for an efficient rate of reaction. N-terminal L-methionine is a prerequisite for activity but the enzyme has broad specificity at other positions. This chain is Peptide deformylase, found in Staphylococcus aureus (strain COL).